A 997-amino-acid chain; its full sequence is FIP1[III]-like protein (997 aa).

4 disordered regions span residues 250–272 (ITSN…LNSV), 289–475 (AGSF…ETEG), 534–553 (SRSS…KEED), and 880–900 (QGKV…TIEQ). A compositionally biased stretch (polar residues) spans 261-272 (SHSYGSKDLNSV). Composition is skewed to basic and acidic residues over residues 309–323 (TPSD…KEES), 334–346 (SVER…DRIR), 367–379 (ESLK…DQRE), and 388–404 (RLAE…EDSG). The Nuclear localization signal signature appears at 397-404 (IKRGEDSG). Positions 534 to 547 (SRSSFDLNQRNSRS) are enriched in polar residues. A coiled-coil region spans residues 930–963 (EIIEEVKGVEIDNERIQESLKKMEKRRERFKGTK).

This sequence belongs to the FIP1 family. In terms of assembly, component of the cleavage and polyadenylation specificity factor (CPSF) complex. Forms a complex with cleavage and polyadenylation specificity factor (CPSF) subunits CLPS5, FIPS5, PAPS4, PCFS1, CSTF64 and CPSF30.

The protein resides in the nucleus. In terms of biological role, component of the cleavage and polyadenylation specificity factor (CPSF) complex that plays a key role in pre-mRNA 3'-end formation, recognizing the AAUAAA signal sequence and interacting with poly(A) polymerase and other factors to bring about cleavage and poly(A) addition. FIP1L1 contributes to poly(A) site recognition and stimulates poly(A) addition. Binds to U-rich RNA sequence elements surrounding the poly(A) site. May act to tether poly(A) polymerase to the CPSF complex. This Arabidopsis thaliana (Mouse-ear cress) protein is FIP1[III]-like protein.